A 201-amino-acid chain; its full sequence is Ras-related protein Ral-a (201 aa).

Residue 18-25 participates in GTP binding; that stretch reads GSGGVGKS. An Effector region motif is present at residues 40–48; sequence YEPTKADSY. GTP contacts are provided by residues 65–69 and 124–127; these read DTAGQ and NKCD. Cysteine methyl ester is present on C198. C198 carries S-geranylgeranyl cysteine lipidation. The propeptide at 199–201 is removed in mature form; it reads TLL.

It belongs to the small GTPase superfamily. Ras family.

It is found in the cell membrane. The protein resides in the cleavage furrow. It localises to the midbody. The protein localises to the midbody ring. The enzyme catalyses GTP + H2O = GDP + phosphate + H(+). In Drosophila melanogaster (Fruit fly), this protein is Ras-related protein Ral-a (Rala).